The sequence spans 96 residues: UPF0235 protein YggU (96 aa).

The protein belongs to the UPF0235 family.

This is UPF0235 protein YggU from Salmonella typhi.